A 333-amino-acid chain; its full sequence is Probable cytosolic iron-sulfur protein assembly protein ciao1-B (333 aa).

7 WD repeats span residues histidine 14–lysine 53, glycine 59–leucine 98, glycine 103–cysteine 142, serine 148–arginine 187, glycine 192–glutamate 231, phenylalanine 246–glutamine 285, and alanine 297–valine 333.

This sequence belongs to the WD repeat CIA1 family. As to quaternary structure, component of the CIA complex.

Functionally, key component of the cytosolic iron-sulfur protein assembly (CIA) complex, a multiprotein complex that mediates the incorporation of iron-sulfur cluster into extramitochondrial Fe/S proteins. This Salmo salar (Atlantic salmon) protein is Probable cytosolic iron-sulfur protein assembly protein ciao1-B (ciao1b).